A 361-amino-acid polypeptide reads, in one-letter code: MSLIETVPVNTEHKSVPVHLHSNLSGLSEEIAKLPGVTSVFLITEKSIHSIYSKYLERELSSLPIKTIYIKGGEKSKHINRTGEVYNQLIEYGADRKSLILAFGGGVVGDFAGFIASTYLRGIRFVQIPTTLLACVDSSVGGKVAVNADFGKNMIGSFYQPEFVFAPLSVLSTLPDREWKCGQAEIIKHSLLSGGEYWEKVKTHSFKDLNVDSTILPYLIAESVRFKANVVSSDEKETGLRKILNLGHTTAHAIESVTKYKKYSHGEAVAIGLVTALLLSEQHSELDPVTTKETIESLKNYGLPFQTKLKSKQLAKHMLHDKKNVGGSIRFVLLKSPGSPIFDIPINSEDIILAIHKQKGI.

Residues 106 to 110, 130 to 131, Lys-143, and Lys-152 each bind NAD(+); these read GVVGD and TT. Residues Glu-185, His-248, and His-265 each coordinate Zn(2+).

The protein belongs to the sugar phosphate cyclases superfamily. Dehydroquinate synthase family. It depends on NAD(+) as a cofactor. Co(2+) is required as a cofactor. Requires Zn(2+) as cofactor.

The protein localises to the cytoplasm. The catalysed reaction is 7-phospho-2-dehydro-3-deoxy-D-arabino-heptonate = 3-dehydroquinate + phosphate. It participates in metabolic intermediate biosynthesis; chorismate biosynthesis; chorismate from D-erythrose 4-phosphate and phosphoenolpyruvate: step 2/7. Catalyzes the conversion of 3-deoxy-D-arabino-heptulosonate 7-phosphate (DAHP) to dehydroquinate (DHQ). The chain is 3-dehydroquinate synthase from Leptospira interrogans serogroup Icterohaemorrhagiae serovar copenhageni (strain Fiocruz L1-130).